The primary structure comprises 274 residues: 4-hydroxy-tetrahydrodipicolinate reductase (274 aa).

NAD(+) is bound by residues 11-16 (GGSGRM) and Glu-37. Arg-38 serves as a coordination point for NADP(+). Residues 101 to 103 (GTT) and 125 to 128 (APNM) each bind NAD(+). His-158 functions as the Proton donor/acceptor in the catalytic mechanism. Residue His-159 coordinates (S)-2,3,4,5-tetrahydrodipicolinate. The active-site Proton donor is Lys-162. (S)-2,3,4,5-tetrahydrodipicolinate is bound at residue 168-169 (GT).

The protein belongs to the DapB family.

The protein localises to the cytoplasm. The catalysed reaction is (S)-2,3,4,5-tetrahydrodipicolinate + NAD(+) + H2O = (2S,4S)-4-hydroxy-2,3,4,5-tetrahydrodipicolinate + NADH + H(+). The enzyme catalyses (S)-2,3,4,5-tetrahydrodipicolinate + NADP(+) + H2O = (2S,4S)-4-hydroxy-2,3,4,5-tetrahydrodipicolinate + NADPH + H(+). It functions in the pathway amino-acid biosynthesis; L-lysine biosynthesis via DAP pathway; (S)-tetrahydrodipicolinate from L-aspartate: step 4/4. Its function is as follows. Catalyzes the conversion of 4-hydroxy-tetrahydrodipicolinate (HTPA) to tetrahydrodipicolinate. This is 4-hydroxy-tetrahydrodipicolinate reductase from Shewanella pealeana (strain ATCC 700345 / ANG-SQ1).